The following is a 421-amino-acid chain: Gamma-glutamyl phosphate reductase (421 aa).

The protein belongs to the gamma-glutamyl phosphate reductase family.

It is found in the cytoplasm. It catalyses the reaction L-glutamate 5-semialdehyde + phosphate + NADP(+) = L-glutamyl 5-phosphate + NADPH + H(+). Its pathway is amino-acid biosynthesis; L-proline biosynthesis; L-glutamate 5-semialdehyde from L-glutamate: step 2/2. Catalyzes the NADPH-dependent reduction of L-glutamate 5-phosphate into L-glutamate 5-semialdehyde and phosphate. The product spontaneously undergoes cyclization to form 1-pyrroline-5-carboxylate. This is Gamma-glutamyl phosphate reductase from Herminiimonas arsenicoxydans.